The primary structure comprises 383 residues: MSPNPSNSLDAFAGEKLAGLEASALRRRLAVTARGPEAAAERGGRSLVSFSCNDYLGLAHDPRVIAAATEALARYGAGAGASRLVTGNSPPLAALEERLARHKGKEAALVFGSGYLANLGIAPALVGAGDLILIDELGHSCLFAGAAMSRAQTVRFAHNDVAQLRTLLAEHRGTARRALILTERVFSMDGDRAPLPEILALAGEYDAWTLVDDAHGLGVVEPGQRAPLEMGTLSKTLGSYGGYLCASQPVIDLLTSRARSLVYTTGLPPASAAAALTALDIVETEPERAARPLALARRFTARLGLPEAMSPIVPVLIGAAEAALALSTALEARGFLVVAIRPPTVAPGTARLRVAFSAAHDEGQVDALAEALIELAPESVRAG.

Arg27 and Arg34 together coordinate substrate. 114 to 115 (GY) is a binding site for pyridoxal 5'-phosphate. His139 serves as a coordination point for substrate. Residues Ser187, 212-215 (DDAH), and 232-235 (TLSK) each bind pyridoxal 5'-phosphate. At Lys235 the chain carries N6-(pyridoxal phosphate)lysine. Thr344 serves as a coordination point for substrate.

The protein belongs to the class-II pyridoxal-phosphate-dependent aminotransferase family. BioF subfamily. In terms of assembly, homodimer. It depends on pyridoxal 5'-phosphate as a cofactor.

The enzyme catalyses 6-carboxyhexanoyl-[ACP] + L-alanine + H(+) = (8S)-8-amino-7-oxononanoate + holo-[ACP] + CO2. It participates in cofactor biosynthesis; biotin biosynthesis. Functionally, catalyzes the decarboxylative condensation of pimeloyl-[acyl-carrier protein] and L-alanine to produce 8-amino-7-oxononanoate (AON), [acyl-carrier protein], and carbon dioxide. This is 8-amino-7-oxononanoate synthase from Methylorubrum extorquens (strain PA1) (Methylobacterium extorquens).